The sequence spans 3326 residues: Deoxyribonuclease CdiA (3326 aa).

A two-partner system transport domain (TPS) region spans residues 36-342 (TADGVLTSGG…ARGALTLTGS (307 aa)). Residues 343–1396 (YAGAGSLYSD…ITVRTGTLTN (1054 aa)) form an FHA-1 region. Residues 1397-1765 (QREGLVVTES…QQLGSPSLTD (369 aa)) form a receptor binding domain (RBD) region. Positions 1766–1951 (YPLPTSQSGL…LAQADKTNLQ (186 aa)) are YP domain. The segment at 1959–2097 (SVSLSAGGDI…AGGPLQLAAG (139 aa)) is periplasmic FHA-1 repeat (pFR). Residues 2125 to 2660 (QGLVQSTVAS…SNRYDSKQTS (536 aa)) are FHA-2. The short motif at 3060-3063 (VENN) is the VENN CT cleavage motif element. Residues 3060–3326 (VENNSLGDIA…DRNRQIGVIK (267 aa)) form a CT domain region.

It in the N-terminal section; belongs to the CdiA toxin family. In terms of assembly, the C-terminal (CT) domain interacts with cognate CdiI but not non-cognate CdiI from E.coli strain 536 / UPEC.

The protein resides in the target cell. It localises to the target cell cytoplasm. In terms of biological role, toxic component of a toxin-immunity protein module, which functions as a cellular contact-dependent growth inhibition (CDI) system. CDI modules allow bacteria to communicate with and inhibit the growth of closely related neighboring bacteria in a contact-dependent fashion. CDI is neutralized by its cognate immunity protein CdiI, but not by non-cognate CdiI from other bacteria. The C-terminal domain (CT) has strong DNase activity; this activity is inhibited by cognate CdiI. The CdiA protein is thought to be exported from the cell through the central lumen of CdiB, the other half of its two-partner system (TPS). The TPS domain probably remains associated with CdiB while the FHA-1 domain forms an extended filament with the receptor-binding domain (RBD) at its extremity; in the secretion arrested state the C-terminus of the RBD and YP domains form a hairpin-like structure as the FHA-2, PT and CT domains are periplasmic. The YP domain is probably responsible for this arrest at the point where it re-enters the host cell periplasm. Upon binding to a target cell outer membrane receptor a signal is transmitted to activate secretion. The filament elongates slightly, the rest of CdiA is secreted and the FHA-2 domain becomes stably associated with the target cell's outer membrane where it facilitates entry of the toxic CT domain into the target cell periplasm. From there the toxic CT domain is cleaved and gains access to the target cell cytoplasm via an inner membrane protein. The chain is Deoxyribonuclease CdiA from Dickeya dadantii (strain 3937) (Erwinia chrysanthemi (strain 3937)).